Consider the following 1741-residue polypeptide: Meiosis regulator and mRNA stability factor 1 (1741 aa).

The 138-residue stretch at 345-482 (IGVFWDIENC…ALLHHAHELV (138 aa)) folds into the NYN domain. 3 disordered regions span residues 594–636 (KVKS…GSVI), 659–678 (TENHQEHLREIPSQNNSHAA), and 683–716 (LTTKKSGVGESSCKSSYKKETSVSRSMTNSPVDK). The segment covering 659–668 (TENHQEHLRE) has biased composition (basic and acidic residues). The region spanning 788–867 (ADIQISNIDY…KRIQVSLATG (80 aa)) is the RRM domain. HTH OST-type domains follow at residues 872-946 (SLSL…SPLG), 1000-1076 (SLKT…HNKP), 1097-1171 (QLIQ…LTHR), 1173-1248 (QVKR…IPKR), 1257-1332 (RTKQ…TEVE), 1333-1408 (QVKA…INRK), 1409-1483 (SLRT…VRLT), and 1484-1558 (NLYM…LKND). A compositionally biased stretch (polar residues) spans 1684–1700 (KLTSGSVASSTAENTSV). Residues 1684 to 1727 (KLTSGSVASSTAENTSVPPRHSSETQLNKEAMDSPAKKQHKNKV) are disordered.

The protein resides in the peroxisome. Essential regulator of oogenesis required for female meiotic progression to repress transposable elements and preventing their mobilization, which is essential for the germline integrity. This Gallus gallus (Chicken) protein is Meiosis regulator and mRNA stability factor 1.